The sequence spans 138 residues: Cellular retinoic acid-binding protein 2 (138 aa).

Positions 21–31 (KVLGVNVMLRK) match the Nuclear localization signal motif. A Glycyl lysine isopeptide (Lys-Gly) (interchain with G-Cter in SUMO) cross-link involves residue Lys-102. 133-135 (RVY) is a binding site for all-trans-retinoate.

It belongs to the calycin superfamily. Fatty-acid binding protein (FABP) family. Interacts with RXR and RARA. Interacts with importin alpha. In terms of processing, sumoylated in response to retinoic acid binding, sumoylation is critical for dissociation from ER and subsequent nuclear translocation.

It is found in the cytoplasm. The protein localises to the endoplasmic reticulum. It localises to the nucleus. In terms of biological role, transports retinoic acid to the nucleus. Regulates the access of retinoic acid to the nuclear retinoic acid receptors. In Homo sapiens (Human), this protein is Cellular retinoic acid-binding protein 2 (CRABP2).